Consider the following 301-residue polypeptide: HTH-type transcriptional regulator AbaB (301 aa).

Residues Met-1–Thr-58 enclose the HTH lysR-type domain. The H-T-H motif DNA-binding region spans Phe-18–Arg-37.

Belongs to the LysR transcriptional regulatory family.

Putative regulator that may be involved in stimulating antibiotic production in S.antibioticus. The sequence is that of HTH-type transcriptional regulator AbaB from Streptomyces antibioticus.